A 314-amino-acid chain; its full sequence is Fibrinogen-like protein 1 (314 aa).

A signal peptide spans 1–22; that stretch reads MGEIRSFVLITVALILGKESWV. Residues 28–62 are a coiled coil; that stretch reads CLQEQVRLRAQVRQLETRVKQQQVVIAQLLHEKEV. The region spanning 76-308 is the Fibrinogen C-terminal domain; that stretch reads LGGKRHYADC…SVVMKIRPSD (233 aa). 2 cysteine pairs are disulfide-bonded: C85–C114 and C250–C263.

Homodimer. Interacts (via the Fibrinogen C-terminal domain) with LAG3 (via Ig-like domains 1 and 2).

The protein localises to the secreted. Immune suppressive molecule that inhibits antigen-specific T-cell activation by acting as a major ligand of LAG3. Responsible for LAG3 T-cell inhibitory function. Binds LAG3 independently from MHC class II (MHC-II). Secreted by, and promotes growth of, hepatocytes. The polypeptide is Fibrinogen-like protein 1 (Rattus norvegicus (Rat)).